The primary structure comprises 151 residues: Ribosomal RNA large subunit methyltransferase H (151 aa).

S-adenosyl-L-methionine contacts are provided by residues Leu-73, Gly-100, and 119–124; that span reads LSKMTM.

The protein belongs to the RNA methyltransferase RlmH family. In terms of assembly, homodimer.

Its subcellular location is the cytoplasm. It catalyses the reaction pseudouridine(1915) in 23S rRNA + S-adenosyl-L-methionine = N(3)-methylpseudouridine(1915) in 23S rRNA + S-adenosyl-L-homocysteine + H(+). In terms of biological role, specifically methylates the pseudouridine at position 1915 (m3Psi1915) in 23S rRNA. The sequence is that of Ribosomal RNA large subunit methyltransferase H from Campylobacter concisus (strain 13826).